The primary structure comprises 232 residues: Ornithine carbamoyltransferase (232 aa).

Residues Q15, R39, and 66 to 69 (HPTQ) each bind carbamoyl phosphate. Residues N99, D163, and 167-168 (SM) each bind L-ornithine. Carbamoyl phosphate is bound by residues 204–207 (HCLP) and T232.

This sequence belongs to the aspartate/ornithine carbamoyltransferase superfamily. OTCase family.

Its subcellular location is the cytoplasm. It catalyses the reaction carbamoyl phosphate + L-ornithine = L-citrulline + phosphate + H(+). It functions in the pathway amino-acid biosynthesis; L-arginine biosynthesis; L-arginine from L-ornithine and carbamoyl phosphate: step 1/3. Functionally, reversibly catalyzes the transfer of the carbamoyl group from carbamoyl phosphate (CP) to the N(epsilon) atom of ornithine (ORN) to produce L-citrulline. The polypeptide is Ornithine carbamoyltransferase (argF) (Neisseria perflava).